The primary structure comprises 205 residues: MAHGPGALMLKCVVVGDGAVGKTCLLMSYANDAFPEEYVPTVFDHYAVSVTVGGKQYLLGLYDTAGQEDYDRLRPLSYPMTDVFLICFSVVNPASFQNVKEEWVPELKEYAPNVPFLLIGTQIDLRDDPKTLARLNDMKEKPICVEQGQKLAKEIGACCYVECSALTQKGLKTVFDEAIIAILTPKKHTVKKRIGSRCINCCLIT.

16–23 (GDGAVGKT) serves as a coordination point for GTP. The Effector region signature appears at 38-46 (YVPTVFDHY). Residues 63–67 (DTAGQ) and 121–124 (TQID) each bind GTP. Position 202 is a cysteine methyl ester (cysteine 202). Residue cysteine 202 is the site of S-farnesyl cysteine attachment. The propeptide at 203-205 (LIT) is removed in mature form.

The protein belongs to the small GTPase superfamily. Rho family. As to quaternary structure, interacts with CDC42EP4 in a GTP-dependent manner. Interacts with ARHGAP33/TCGAP. Interacts with CDC42EP1, CDC42EP2, CDC42EP3, PARD6A, PARD6G (and probably PARD6B) in a GTP-dependent manner. Part of a quaternary complex containing PARD3, some PARD6 protein (PARD6A, PARD6B or PARD6G) and some atypical PKC protein (PRKCI or PRKCZ). Interacts with EXO70 in a GTP-dependent manner. Interacts with GOPC. In terms of processing, may be post-translationally modified by both palmitoylation and polyisoprenylation.

The protein resides in the cytoplasm. It localises to the cell membrane. Regulated by guanine nucleotide exchange factors (GEFs) which promote the exchange of bound GDP for free GTP, GTPase activating proteins (GAPs) which increase the GTP hydrolysis activity, and GDP dissociation inhibitors which inhibit the dissociation of the nucleotide from the GTPase. In terms of biological role, plasma membrane-associated small GTPase which cycles between an active GTP-bound and an inactive GDP-bound state. In active state binds to a variety of effector proteins to regulate cellular responses. Involved in epithelial cell polarization processes. May play a role in CFTR trafficking to the plasma membrane. Causes the formation of thin, actin-rich surface projections called filopodia. This chain is Rho-related GTP-binding protein RhoQ (RHOQ), found in Homo sapiens (Human).